The primary structure comprises 187 residues: Isopentenyl-diphosphate Delta-isomerase (187 aa).

Residues His-36, His-43, and His-80 each contribute to the Mn(2+) site. The region spanning Val-41–Glu-178 is the Nudix hydrolase domain. A Mg(2+)-binding site is contributed by Glu-98. Residues Glu-127 and Glu-129 each contribute to the Mn(2+) site. Glu-129 is a catalytic residue.

This sequence belongs to the IPP isomerase type 1 family. It depends on Mg(2+) as a cofactor. The cofactor is Mn(2+).

It is found in the cytoplasm. It catalyses the reaction isopentenyl diphosphate = dimethylallyl diphosphate. It functions in the pathway isoprenoid biosynthesis; dimethylallyl diphosphate biosynthesis; dimethylallyl diphosphate from isopentenyl diphosphate: step 1/1. Its function is as follows. Catalyzes the 1,3-allylic rearrangement of the homoallylic substrate isopentenyl (IPP) to its highly electrophilic allylic isomer, dimethylallyl diphosphate (DMAPP). The protein is Isopentenyl-diphosphate Delta-isomerase of Haloarcula marismortui (strain ATCC 43049 / DSM 3752 / JCM 8966 / VKM B-1809) (Halobacterium marismortui).